Reading from the N-terminus, the 560-residue chain is Protein SINE1 (560 aa).

At glycine 2 the chain carries N-acetylglycine. Residues 7-287 (PILRQELANL…VRGAAYEAMM (281 aa)) are ARMADILLO-type fold. Residues 517–560 (KKKKKKMSYAKLVIAISFVVVALFATVILMVNQDDDVGYYTVPT) enclose the KASH domain. The helical transmembrane segment at 528-548 (LVIAISFVVVALFATVILMVN) threads the bilayer. A Required for nuclear localization motif is present at residues 557-560 (TVPT).

As to quaternary structure, interacts with SUN1 and SUN2. Binds to F-actin. As to expression, preferentially expressed in guards cells, but also detected in root cells.

The protein localises to the nucleus membrane. Its function is as follows. Plays a role in nucleus positioning in guard cells. This chain is Protein SINE1, found in Arabidopsis thaliana (Mouse-ear cress).